Here is a 559-residue protein sequence, read N- to C-terminus: N-acetylglucosamine-6-sulfatase (559 aa).

A disordered region spans residues M1 to P26. A signal peptide spans M1–A47. Ca(2+)-binding residues include D62, D63, and C98. C98 (nucleophile) is an active-site residue. 3-oxoalanine (Cys) is present on C98. N-linked (GlcNAc...) asparagine glycosylation is found at N118, N124, N190, N205, N217, N286, and N324. Residues D333 and N334 each coordinate Ca(2+). Residues N369, N394, N412, N429, N456, and N487 are each glycosylated (N-linked (GlcNAc...) asparagine). S548 is modified (phosphoserine).

The protein belongs to the sulfatase family. Requires Ca(2+) as cofactor. In terms of processing, processed by internal peptidase. The conversion to 3-oxoalanine (also known as C-formylglycine, FGly), of a serine or cysteine residue in prokaryotes and of a cysteine residue in eukaryotes, is critical for catalytic activity.

The protein resides in the lysosome. The enzyme catalyses Hydrolysis of the 6-sulfate groups of the N-acetyl-D-glucosamine 6-sulfate units of heparan sulfate and keratan sulfate.. In terms of biological role, hydrolyzes 6-sulfate groups in N-acetyl-d-glucosaminide units of heparin sulfate and keratan sulfate. This is N-acetylglucosamine-6-sulfatase (GNS) from Capra hircus (Goat).